The sequence spans 221 residues: Nuclear phosphoprotein UL3 homolog (221 aa).

This sequence belongs to the alphaherpesvirinae HHV-1 UL3 family. Phosphorylated.

The protein localises to the host nucleus. The polypeptide is Nuclear phosphoprotein UL3 homolog (Varicella-zoster virus (strain Dumas) (HHV-3)).